The sequence spans 537 residues: Tegument protein BRRF2 (537 aa).

Disordered regions lie at residues leucine 325–aspartate 474 and glycine 486–isoleucine 537. Polar residues predominate over residues lysine 334–asparagine 347. Positions serine 423–glycine 441 are enriched in low complexity. A compositionally biased stretch (acidic residues) spans aspartate 492–glutamate 517.

The protein belongs to the lymphocryptovirus BRRF2 family.

It is found in the virion tegument. The sequence is that of Tegument protein BRRF2 from Homo sapiens (Human).